A 442-amino-acid chain; its full sequence is Trigger factor (442 aa).

The 84-residue stretch at 176–259 folds into the PPIase FKBP-type domain; sequence GDFISLSLYV…VNAVIEISSP (84 aa).

Belongs to the FKBP-type PPIase family. Tig subfamily.

It localises to the cytoplasm. The enzyme catalyses [protein]-peptidylproline (omega=180) = [protein]-peptidylproline (omega=0). In terms of biological role, involved in protein export. Acts as a chaperone by maintaining the newly synthesized protein in an open conformation. Functions as a peptidyl-prolyl cis-trans isomerase. This is Trigger factor from Chlamydia trachomatis serovar A (strain ATCC VR-571B / DSM 19440 / HAR-13).